Consider the following 741-residue polypeptide: Hemolysin (741 aa).

Residues M1–A25 form the signal peptide. Residues N26–A157 constitute a propeptide that is removed on maturation. Cystine bridges form between C182-C200, C497-C511, and C537-C549. A Ricin B-type lectin domain is found at R484–L575. Residues N607 to N741 form a beta-prism domain region.

The protein belongs to the HlyA hemolysin family. In terms of assembly, monomer. Homoheptamer. After binding to target membranes the protein assembles into a heptameric pre-pore complex. Proteolytic cleavage triggers a conformation change that is required for membrane insertion and pore formation. In terms of processing, proteolytical cleavage is required to convert the 80 kDa hemolysin precursor into the active 65 kDa hemolysin.

The protein resides in the secreted. It localises to the host cell membrane. In terms of biological role, bacterial hemolysin that causes cytolysis by forming heptameric pores in target host membranes. The protein is Hemolysin (hlyA) of Vibrio cholerae serotype O1 (strain ATCC 39315 / El Tor Inaba N16961).